A 309-amino-acid chain; its full sequence is Mitochondrial import receptor subunit TOM34 (309 aa).

TPR repeat units follow at residues 9-42 (VEEL…LQAQ), 51-84 (SVLY…VPFS), and 86-118 (KPLL…DDSV). Ser-160 carries the post-translational modification Phosphoserine. Positions 161–189 (LPSENHKEMAKSKSKETTATKNRVPSAGD) are disordered. Residues 164–178 (ENHKEMAKSKSKETT) are compositionally biased toward basic and acidic residues. Phosphoserine is present on Ser-186. TPR repeat units lie at residues 193–226 (AKVL…SNLE), 227–260 (SATY…DGKN), and 262–294 (KAFY…EPRN). Residue Lys-197 forms a Glycyl lysine isopeptide (Lys-Gly) (interchain with G-Cter in SUMO2) linkage.

The protein belongs to the Tom34 family. In terms of assembly, interacts with HSP90A, VCP, ATP6V1D, KIAA0665, AMPK, and DMAP1 through its TPR repeat.

It is found in the cytoplasm. The protein localises to the mitochondrion outer membrane. Functionally, plays a role in the import of cytosolically synthesized preproteins into mitochondria. Binds the mature portion of precursor proteins. Interacts with cellular components, and possesses weak ATPase activity. May be a chaperone-like protein that helps to keep newly synthesized precursors in an unfolded import compatible state. The chain is Mitochondrial import receptor subunit TOM34 (TOMM34) from Pongo abelii (Sumatran orangutan).